The following is a 484-amino-acid chain: MSQVNRRKVLFVTSELADLVKTGGLGDVSAALPRAMRHLHDVRVLIPGYPQVINSGNPIHIISQLGGHAALPPCKVGRMDMKDGLVIYVLICPELYEREGTPYADTNGRDWSDNHIRFARLGLAAAEFAAGEVKSQWCPELVHAHDWPAGLAPAYMRWRGQSTPSIFTVHNLAYQGTVSTASSRELGIPDEAITPEGMEFYGKLSFIKAGMAFANHITTVSATYAREITTPEFGCGLEGFLQSKADKGQLSGIPNGIDESWDAATDEHLICHFAPNEWTRKEINADYVRELFELDASSGPLYAVVSRLVYQKGLDLTIGVAEHIVNNGGQIAIIGRGEPEEEDAMRELAARFPGRIGVRIGFNETDARRMFAGSDFLLMPSRYEPCGLSQMYAQRFGSLPVARNTGGLADTIEDGVTGFLFNESTVESYTEALNRTFQVFAHPELLNAMRCRAMAAPFNWHQAVEPYAELYRDLLKKNVSMTSN.

Lys-21 is an ADP-alpha-D-glucose binding site.

This sequence belongs to the glycosyltransferase 1 family. Bacterial/plant glycogen synthase subfamily.

The enzyme catalyses [(1-&gt;4)-alpha-D-glucosyl](n) + ADP-alpha-D-glucose = [(1-&gt;4)-alpha-D-glucosyl](n+1) + ADP + H(+). Its pathway is glycan biosynthesis; glycogen biosynthesis. Its function is as follows. Synthesizes alpha-1,4-glucan chains using ADP-glucose. In Pseudomonas syringae pv. tomato (strain ATCC BAA-871 / DC3000), this protein is Glycogen synthase.